Here is a 441-residue protein sequence, read N- to C-terminus: Proline--tRNA ligase (441 aa).

The protein belongs to the class-II aminoacyl-tRNA synthetase family. ProS type 2 subfamily. Homodimer.

The protein resides in the cytoplasm. It catalyses the reaction tRNA(Pro) + L-proline + ATP = L-prolyl-tRNA(Pro) + AMP + diphosphate. In terms of biological role, catalyzes the attachment of proline to tRNA(Pro) in a two-step reaction: proline is first activated by ATP to form Pro-AMP and then transferred to the acceptor end of tRNA(Pro). In Bartonella henselae (strain ATCC 49882 / DSM 28221 / CCUG 30454 / Houston 1) (Rochalimaea henselae), this protein is Proline--tRNA ligase.